The sequence spans 120 residues: Large ribosomal subunit protein bL20 (120 aa).

This sequence belongs to the bacterial ribosomal protein bL20 family.

Its function is as follows. Binds directly to 23S ribosomal RNA and is necessary for the in vitro assembly process of the 50S ribosomal subunit. It is not involved in the protein synthesizing functions of that subunit. The sequence is that of Large ribosomal subunit protein bL20 from Baumannia cicadellinicola subsp. Homalodisca coagulata.